The sequence spans 240 residues: tRNA pseudouridine synthase B (240 aa).

Catalysis depends on Asp54, which acts as the Nucleophile.

Belongs to the pseudouridine synthase TruB family. Type 1 subfamily.

The enzyme catalyses uridine(55) in tRNA = pseudouridine(55) in tRNA. In terms of biological role, responsible for synthesis of pseudouridine from uracil-55 in the psi GC loop of transfer RNAs. This is tRNA pseudouridine synthase B from Chlorobaculum tepidum (strain ATCC 49652 / DSM 12025 / NBRC 103806 / TLS) (Chlorobium tepidum).